A 155-amino-acid chain; its full sequence is Endoribonuclease YbeY (155 aa).

H114, H118, and H124 together coordinate Zn(2+).

This sequence belongs to the endoribonuclease YbeY family. Zn(2+) serves as cofactor.

It localises to the cytoplasm. Functionally, single strand-specific metallo-endoribonuclease involved in late-stage 70S ribosome quality control and in maturation of the 3' terminus of the 16S rRNA. The protein is Endoribonuclease YbeY of Citrobacter koseri (strain ATCC BAA-895 / CDC 4225-83 / SGSC4696).